A 463-amino-acid polypeptide reads, in one-letter code: tRNA modification GTPase MnmE (463 aa).

Residues Arg-26, Glu-88, and Arg-127 each contribute to the (6S)-5-formyl-5,6,7,8-tetrahydrofolate site. The 160-residue stretch at 224–383 (GLATAIIGRP…LEQRIAKMFF (160 aa)) folds into the TrmE-type G domain. Asn-234 contacts K(+). GTP-binding positions include 234 to 239 (NVGKSS), 253 to 259 (TDVAGTT), and 278 to 281 (DTAG). Ser-238 is a binding site for Mg(2+). Residues Thr-253, Val-255, and Thr-258 each coordinate K(+). Residue Thr-259 participates in Mg(2+) binding. A (6S)-5-formyl-5,6,7,8-tetrahydrofolate-binding site is contributed by Lys-463.

It belongs to the TRAFAC class TrmE-Era-EngA-EngB-Septin-like GTPase superfamily. TrmE GTPase family. As to quaternary structure, homodimer. Heterotetramer of two MnmE and two MnmG subunits. K(+) is required as a cofactor.

It localises to the cytoplasm. Exhibits a very high intrinsic GTPase hydrolysis rate. Involved in the addition of a carboxymethylaminomethyl (cmnm) group at the wobble position (U34) of certain tRNAs, forming tRNA-cmnm(5)s(2)U34. The sequence is that of tRNA modification GTPase MnmE from Lactiplantibacillus plantarum (strain ATCC BAA-793 / NCIMB 8826 / WCFS1) (Lactobacillus plantarum).